We begin with the raw amino-acid sequence, 147 residues long: MRTTPLAKTSEIERKWYLIDATDVSLGRLSTAVATILRGKNKPQFTPNVDTGDNVIIVNASKLKLTGKKATDKIYYHHSEYRGGLKSVSAGELLAKNPVKLVELSVKGMLPKNTLGHQEFLKMHVYAGEEHKHEAQKPEKLDINNLI.

This sequence belongs to the universal ribosomal protein uL13 family. As to quaternary structure, part of the 50S ribosomal subunit.

Its function is as follows. This protein is one of the early assembly proteins of the 50S ribosomal subunit, although it is not seen to bind rRNA by itself. It is important during the early stages of 50S assembly. The polypeptide is Large ribosomal subunit protein uL13 (Lactobacillus delbrueckii subsp. bulgaricus (strain ATCC 11842 / DSM 20081 / BCRC 10696 / JCM 1002 / NBRC 13953 / NCIMB 11778 / NCTC 12712 / WDCM 00102 / Lb 14)).